The primary structure comprises 2130 residues: COPII coat assembly protein SEC16 (2130 aa).

Composition is skewed to basic and acidic residues over residues lysine 27–serine 38, aspartate 50–leucine 72, and glutamate 88–proline 97. Disordered stretches follow at residues lysine 27–lysine 516, phenylalanine 532–tyrosine 585, proline 598–serine 647, glutamine 810–isoleucine 842, aspartate 1347–valine 1366, aspartate 1374–serine 1519, proline 1558–aspartate 1731, aspartate 1753–lysine 1997, and isoleucine 2014–lysine 2130. Residues glutamine 98 to glycine 120 show a composition bias toward polar residues. Basic and acidic residues-rich tracts occupy residues glutamate 128–alanine 138, aspartate 149–leucine 170, glutamate 178–aspartate 188, and lysine 199–isoleucine 216. Polar residues-rich tracts occupy residues tryptophan 267–alanine 279 and alanine 293–glutamine 335. Basic and acidic residues predominate over residues aspartate 380–aspartate 395. Residues threonine 405–aspartate 420 show a composition bias toward low complexity. Residues methionine 421–isoleucine 431 are compositionally biased toward polar residues. 2 stretches are compositionally biased toward basic and acidic residues: residues proline 447 to leucine 481 and glutamate 504 to threonine 513. A compositionally biased stretch (low complexity) spans threonine 538–threonine 568. Polar residues predominate over residues arginine 601–proline 617. Composition is skewed to polar residues over residues aspartate 1374–glutamine 1388, valine 1399–serine 1420, leucine 1428–asparagine 1498, tyrosine 1505–serine 1519, and serine 1559–isoleucine 1574. Residues threonine 1627–aspartate 1640 show a composition bias toward basic and acidic residues. Composition is skewed to polar residues over residues serine 1701–lysine 1714 and threonine 1722–aspartate 1731. A compositionally biased stretch (basic and acidic residues) spans aspartate 1753–serine 1779. Polar residues-rich tracts occupy residues alanine 1793–valine 1803 and threonine 1819–arginine 1839. Positions threonine 1840 to serine 1857 are enriched in basic and acidic residues. The segment covering serine 1896–tyrosine 1911 has biased composition (low complexity). Over residues valine 1925–aspartate 1935 the composition is skewed to acidic residues. 2 stretches are compositionally biased toward basic and acidic residues: residues glutamate 1936–glutamine 1963 and arginine 1981–lysine 1997. Low complexity-rich tracts occupy residues serine 2039–serine 2050, alanine 2061–glutamine 2083, and proline 2092–serine 2104.

The protein belongs to the SEC16 family.

It is found in the endoplasmic reticulum membrane. Involved in the initiation of assembly of the COPII coat required for the formation of transport vesicles from the endoplasmic reticulum (ER) and the selection of cargo molecules. Also involved in autophagy. The sequence is that of COPII coat assembly protein SEC16 (SEC16) from Debaryomyces hansenii (strain ATCC 36239 / CBS 767 / BCRC 21394 / JCM 1990 / NBRC 0083 / IGC 2968) (Yeast).